The primary structure comprises 226 residues: Ribosomal RNA small subunit methyltransferase G (226 aa).

S-adenosyl-L-methionine-binding positions include G95, L100, 146-147 (VE), and R159.

This sequence belongs to the methyltransferase superfamily. RNA methyltransferase RsmG family.

Its subcellular location is the cytoplasm. It carries out the reaction guanosine(527) in 16S rRNA + S-adenosyl-L-methionine = N(7)-methylguanosine(527) in 16S rRNA + S-adenosyl-L-homocysteine. Functionally, specifically methylates the N7 position of guanine in position 527 of 16S rRNA. The chain is Ribosomal RNA small subunit methyltransferase G from Acidovorax sp. (strain JS42).